Reading from the N-terminus, the 263-residue chain is Zinc transporter ZupT (263 aa).

A run of 5 helical transmembrane segments spans residues 1–21 (MLFAFGLTLFAGLATGIGGLI), 37–57 (LGFSVGVMLYVSFVEILPGAF), 68–88 (GGSWAAVIGFFGGIALIAIID), 116–136 (MMKMGVLTALAIAIHNFPEGF), and 138–158 (TFLAGLSDPMIAIPVAVAIAI). Asn131 and Glu134 together coordinate Fe(2+). Residue Glu134 coordinates Zn(2+). Residue His159 coordinates Zn(2+). Fe(2+) is bound by residues Asn160, Glu163, and Glu192. Residue Glu163 coordinates Zn(2+). The next 3 helical transmembrane spans lie at 184 to 204 (WATLSGLAEPAGALIGFLLLM), 206 to 226 (FIGPEALGLCFAAVAGVMVFI), and 243 to 263 (TAIYGLIAGMAVMAISLLLFI).

Belongs to the ZIP transporter (TC 2.A.5) family. ZupT subfamily.

The protein localises to the cell membrane. The enzyme catalyses Zn(2+)(in) = Zn(2+)(out). Mediates zinc uptake. May also transport other divalent cations. In Corynebacterium glutamicum (strain ATCC 13032 / DSM 20300 / JCM 1318 / BCRC 11384 / CCUG 27702 / LMG 3730 / NBRC 12168 / NCIMB 10025 / NRRL B-2784 / 534), this protein is Zinc transporter ZupT.